The chain runs to 215 residues: uncharacterized protein (215 aa).

A run of 5 helical transmembrane segments spans residues 1 to 21, 36 to 56, 67 to 87, 92 to 112, and 118 to 138; these read MTAE…AIGM, VLIG…FADV, SRIA…NILV, IVGL…MVIG, and LGIY…QLTF.

This sequence belongs to the MgtC/SapB family.

It is found in the cell inner membrane. This is an uncharacterized protein from Escherichia coli O157:H7.